A 315-amino-acid chain; its full sequence is Methionyl-tRNA formyltransferase (315 aa).

112-115 contacts (6S)-5,6,7,8-tetrahydrofolate; sequence SLLP.

It belongs to the Fmt family.

The enzyme catalyses L-methionyl-tRNA(fMet) + (6R)-10-formyltetrahydrofolate = N-formyl-L-methionyl-tRNA(fMet) + (6S)-5,6,7,8-tetrahydrofolate + H(+). Functionally, attaches a formyl group to the free amino group of methionyl-tRNA(fMet). The formyl group appears to play a dual role in the initiator identity of N-formylmethionyl-tRNA by promoting its recognition by IF2 and preventing the misappropriation of this tRNA by the elongation apparatus. The protein is Methionyl-tRNA formyltransferase of Leptospira interrogans serogroup Icterohaemorrhagiae serovar copenhageni (strain Fiocruz L1-130).